Consider the following 317-residue polypeptide: Acetyl-coenzyme A carboxylase carboxyl transferase subunit alpha (317 aa).

A CoA carboxyltransferase C-terminal domain is found at 33–294 (NLDDEITRLQ…KKRLLADLAD (262 aa)).

Belongs to the AccA family. In terms of assembly, acetyl-CoA carboxylase is a heterohexamer composed of biotin carboxyl carrier protein (AccB), biotin carboxylase (AccC) and two subunits each of ACCase subunit alpha (AccA) and ACCase subunit beta (AccD).

Its subcellular location is the cytoplasm. It carries out the reaction N(6)-carboxybiotinyl-L-lysyl-[protein] + acetyl-CoA = N(6)-biotinyl-L-lysyl-[protein] + malonyl-CoA. Its pathway is lipid metabolism; malonyl-CoA biosynthesis; malonyl-CoA from acetyl-CoA: step 1/1. Component of the acetyl coenzyme A carboxylase (ACC) complex. First, biotin carboxylase catalyzes the carboxylation of biotin on its carrier protein (BCCP) and then the CO(2) group is transferred by the carboxyltransferase to acetyl-CoA to form malonyl-CoA. In Histophilus somni (strain 2336) (Haemophilus somnus), this protein is Acetyl-coenzyme A carboxylase carboxyl transferase subunit alpha.